A 95-amino-acid polypeptide reads, in one-letter code: MAVETIQKPETTTKRKIAPRYRVLLHNDDFNPMEYVVMVLMQTVPSLTQPQAVDIMMEAHTNGTGLVITCDIEPAEFYCEQLKSHGLSSSIEPDD.

It belongs to the ClpS family. Binds to the N-terminal domain of the chaperone ClpA.

Its function is as follows. Involved in the modulation of the specificity of the ClpAP-mediated ATP-dependent protein degradation. The chain is ATP-dependent Clp protease adapter protein ClpS from Synechococcus elongatus (strain ATCC 33912 / PCC 7942 / FACHB-805) (Anacystis nidulans R2).